A 429-amino-acid chain; its full sequence is Adenylosuccinate synthetase (429 aa).

GTP-binding positions include glycine 12–lysine 18 and glycine 40–threonine 42. The Proton acceptor role is filled by aspartate 13. Mg(2+) is bound by residues aspartate 13 and glycine 40. IMP is bound by residues aspartate 13–lysine 16, asparagine 38–histidine 41, threonine 129, arginine 143, glutamine 223, threonine 238, and arginine 302. The active-site Proton donor is the histidine 41. Threonine 298–arginine 304 contributes to the substrate binding site. GTP contacts are provided by residues arginine 304, lysine 330 to aspartate 332, and serine 412 to serine 414.

It belongs to the adenylosuccinate synthetase family. In terms of assembly, homodimer. The cofactor is Mg(2+).

It localises to the cytoplasm. It carries out the reaction IMP + L-aspartate + GTP = N(6)-(1,2-dicarboxyethyl)-AMP + GDP + phosphate + 2 H(+). It participates in purine metabolism; AMP biosynthesis via de novo pathway; AMP from IMP: step 1/2. Functionally, plays an important role in the de novo pathway of purine nucleotide biosynthesis. Catalyzes the first committed step in the biosynthesis of AMP from IMP. The sequence is that of Adenylosuccinate synthetase from Paramagnetospirillum magneticum (strain ATCC 700264 / AMB-1) (Magnetospirillum magneticum).